A 269-amino-acid chain; its full sequence is MYFMKNVITLIGLVLFSSFCFASEPLPWQMGFQPPASPIMEELHKFHDFLLYISTAIVLFVAGLLVFVCIKFNARNNPVPAKFSHNILIEIIWTVIPIIILVIIAVPSFRILRHAEKIPEADLTIKVVGYQWYWHYIYPDHNDIEFDSVMISDENLKPDQKRLLDVDNRIVIPENATVRFLITASDVIHSFAVPSLGFKIDAVPGRVNETWTRVAKKGVYYGQCSELCGINHGFMPIAIEVVSKEDFDNWVASKNKVAANGENSKLAAN.

3 consecutive transmembrane segments (helical) span residues 8-28 (ITLIGLVLFSSFCFASEPLPW), 50-70 (LLYISTAIVLFVAGLLVFVCI), and 87-107 (ILIEIIWTVIPIIILVIIAVP). The Cu cation site is built by H189, C224, C228, and H232.

This sequence belongs to the cytochrome c oxidase subunit 2 family. The cofactor is Cu cation. It depends on heme as a cofactor.

It localises to the cell membrane. It catalyses the reaction 4 Fe(II)-[cytochrome c] + O2 + 8 H(+)(in) = 4 Fe(III)-[cytochrome c] + 2 H2O + 4 H(+)(out). Functionally, subunits I and II form the functional core of the enzyme complex. Electrons originating in cytochrome c are transferred via heme a and Cu(A) to the binuclear center formed by heme a3 and Cu(B). The sequence is that of Probable cytochrome c oxidase subunit 2 (ctaC) from Rickettsia bellii (strain RML369-C).